A 31-amino-acid chain; its full sequence is Kallikrein-1 (31 aa).

The Peptidase S1 domain occupies 1–31 (VIGGQECARDSHPWQAAVYHFSDIECGGVLV).

It belongs to the peptidase S1 family. Kallikrein subfamily.

The enzyme catalyses Preferential cleavage of Arg-|-Xaa bonds in small molecule substrates. Highly selective action to release kallidin (lysyl-bradykinin) from kininogen involves hydrolysis of Met-|-Xaa or Leu-|-Xaa.. Functionally, glandular kallikreins cleave Met-Lys and Arg-Ser bonds in kininogen to release Lys-bradykinin. In Cavia porcellus (Guinea pig), this protein is Kallikrein-1.